The chain runs to 1106 residues: Platelet-derived growth factor receptor beta (1106 aa).

The first 32 residues, 1-32 (MRLPGAMPALALKGELLLLSLLLLLEPQISQG), serve as a signal peptide directing secretion. 5 consecutive Ig-like C2-type domains span residues 33–120 (LVVT…YIFV), 129–210 (PNDA…YRLQ), 214–309 (INVS…INIT), 331–403 (HRSR…HEDA), and 416–524 (PVRV…VIVV). Residues 33-532 (LVVTPPGPEL…VVPHSLPFKV (500 aa)) are Extracellular-facing. 3 N-linked (GlcNAc...) asparagine glycosylation sites follow: asparagine 45, asparagine 89, and asparagine 103. Cysteine 54 and cysteine 100 are joined by a disulfide. Residues cysteine 149 and cysteine 190 are joined by a disulfide bond. Residues asparagine 215 and asparagine 230 are each glycosylated (N-linked (GlcNAc...) asparagine). The cysteines at positions 235 and 291 are disulfide-linked. N-linked (GlcNAc...) asparagine glycosylation is found at asparagine 292, asparagine 307, asparagine 354, asparagine 371, asparagine 468, and asparagine 479. Cysteine 436 and cysteine 508 are disulfide-bonded. Residues 533 to 553 (VVISAILALVVLTIISLIILI) form a helical membrane-spanning segment. The Cytoplasmic segment spans residues 554-1106 (MLWQKKPRYE…PRAEAEDSFL (553 aa)). Phosphotyrosine; by autocatalysis occurs at positions 562, 579, and 581. The region spanning 600 to 962 (LVLGRTLGSG…QLVLLLERLL (363 aa)) is the Protein kinase domain. ATP-binding positions include 606–614 (LGSGAFGQV) and lysine 634. Tyrosine 686 carries the phosphotyrosine; by ABL1 and ABL2 modification. Phosphotyrosine; by autocatalysis occurs at positions 716, 740, 751, 763, 771, 775, and 778. Catalysis depends on aspartate 826, which acts as the Proton acceptor. Tyrosine 857 bears the Phosphotyrosine; by autocatalysis mark. 2 positions are modified to phosphotyrosine; by ABL1 and ABL2: tyrosine 934 and tyrosine 970. 2 positions are modified to phosphotyrosine; by autocatalysis: tyrosine 1009 and tyrosine 1021. The segment at 1019–1106 (NDYIIPLPDP…PRAEAEDSFL (88 aa)) is disordered. Residues 1043–1060 (SLASSTLNEVNTSSTISC) show a composition bias toward polar residues. The segment covering 1066–1088 (PQDEPEPEPQLELQVEPEPELEQ) has biased composition (acidic residues).

The protein belongs to the protein kinase superfamily. Tyr protein kinase family. CSF-1/PDGF receptor subfamily. Interacts with homodimeric PDGFB and PDGFD, and with heterodimers formed by PDGFA and PDGFB. May also interact with homodimeric PDGFC. Monomer in the absence of bound ligand. Interaction with homodimeric PDGFB, heterodimers formed by PDGFA and PDGFB or homodimeric PDGFD, leads to receptor dimerization, where both PDGFRA homodimers and heterodimers with PDGFRB are observed. Interacts with SH2B2/APS. Interacts directly (tyrosine phosphorylated) with SHB. Interacts (tyrosine phosphorylated) with PIK3R1 and RASA1. Interacts (tyrosine phosphorylated) with CBL. Interacts (tyrosine phosphorylated) with SRC and SRC family kinases. Interacts (tyrosine phosphorylated) with PIK3C2B, maybe indirectly. Interacts (tyrosine phosphorylated) with SHC1, GRB7, GRB10 and NCK1. Interaction with GRB2 is mediated by SHC1. Interacts (via C-terminus) with NHERF1. Autophosphorylated on tyrosine residues upon ligand binding. Autophosphorylation occurs in trans, i.e. one subunit of the dimeric receptor phosphorylates tyrosine residues on the other subunit. Phosphorylation at Tyr-579, and to a lesser degree, at Tyr-581, is important for interaction with SRC family kinases. Phosphorylation at Tyr-740 and Tyr-751 is important for interaction with PIK3R1. Phosphorylation at Tyr-751 is important for interaction with NCK1. Phosphorylation at Tyr-771 and Tyr-857 is important for interaction with RASA1/GAP. Phosphorylation at Tyr-857 is important for efficient phosphorylation of PLCG1 and PTPN11, resulting in increased phosphorylation of AKT1, MAPK1/ERK2 and/or MAPK3/ERK1, PDCD6IP/ALIX and STAM, and in increased cell proliferation. Phosphorylation at Tyr-1009 is important for interaction with PTPN11. Phosphorylation at Tyr-1009 and Tyr-1021 is important for interaction with PLCG1. Phosphorylation at Tyr-1021 is important for interaction with CBL; PLCG1 and CBL compete for the same binding site. Dephosphorylated by PTPRJ at Tyr-751, Tyr-857, Tyr-1009 and Tyr-1021. Dephosphorylated by PTPN2 at Tyr-579 and Tyr-1021. In terms of processing, N-glycosylated. Post-translationally, ubiquitinated. After autophosphorylation, the receptor is polyubiquitinated, leading to its degradation.

The protein resides in the cell membrane. Its subcellular location is the cytoplasmic vesicle. It is found in the lysosome lumen. It carries out the reaction L-tyrosyl-[protein] + ATP = O-phospho-L-tyrosyl-[protein] + ADP + H(+). Present in an inactive conformation in the absence of bound ligand. Binding of PDGFB and/or PDGFD leads to dimerization and activation by autophosphorylation on tyrosine residues. Inhibited by imatinib. Tyrosine-protein kinase that acts as a cell-surface receptor for homodimeric PDGFB and PDGFD and for heterodimers formed by PDGFA and PDGFB, and plays an essential role in the regulation of embryonic development, cell proliferation, survival, differentiation, chemotaxis and migration. Plays an essential role in blood vessel development by promoting proliferation, migration and recruitment of pericytes and smooth muscle cells to endothelial cells. Plays a role in the migration of vascular smooth muscle cells and the formation of neointima at vascular injury sites. Required for normal development of the cardiovascular system. Required for normal recruitment of pericytes (mesangial cells) in the kidney glomerulus, and for normal formation of a branched network of capillaries in kidney glomeruli. Promotes rearrangement of the actin cytoskeleton and the formation of membrane ruffles. Binding of its cognate ligands - homodimeric PDGFB, heterodimers formed by PDGFA and PDGFB or homodimeric PDGFD -leads to the activation of several signaling cascades; the response depends on the nature of the bound ligand and is modulated by the formation of heterodimers between PDGFRA and PDGFRB. Phosphorylates PLCG1, PIK3R1, PTPN11, RASA1/GAP, CBL, SHC1 and NCK1. Activation of PLCG1 leads to the production of the cellular signaling molecules diacylglycerol and inositol 1,4,5-trisphosphate, mobilization of cytosolic Ca(2+) and the activation of protein kinase C. Phosphorylation of PIK3R1, the regulatory subunit of phosphatidylinositol 3-kinase, leads to the activation of the AKT1 signaling pathway. Phosphorylation of SHC1, or of the C-terminus of PTPN11, creates a binding site for GRB2, resulting in the activation of HRAS, RAF1 and down-stream MAP kinases, including MAPK1/ERK2 and/or MAPK3/ERK1. Promotes phosphorylation and activation of SRC family kinases. Promotes phosphorylation of PDCD6IP/ALIX and STAM. Receptor signaling is down-regulated by protein phosphatases that dephosphorylate the receptor and its down-stream effectors, and by rapid internalization of the activated receptor. The chain is Platelet-derived growth factor receptor beta (PDGFRB) from Homo sapiens (Human).